Here is a 506-residue protein sequence, read N- to C-terminus: Ent-kaurenoic acid oxidase (506 aa).

Residues 11-31 (AWAAGDLWVLAAAVVAGVVLV) form a helical membrane-spanning segment. Cys451 provides a ligand contact to heme.

It belongs to the cytochrome P450 family. The cofactor is heme. Expressed in roots and panicles. Expressed at low levels in vegetative shoot apices, leaf sheaths, leaf blades and stems.

It is found in the endoplasmic reticulum membrane. The enzyme catalyses ent-kaur-16-en-19-oate + 3 reduced [NADPH--hemoprotein reductase] + 3 O2 = gibberellin A12 + 3 oxidized [NADPH--hemoprotein reductase] + 4 H2O + 4 H(+). The catalysed reaction is ent-kaur-16-en-19-oate + reduced [NADPH--hemoprotein reductase] + O2 = ent-7alpha-hydroxykaur-16-en-19-oate + oxidized [NADPH--hemoprotein reductase] + H2O + H(+). It carries out the reaction ent-7alpha-hydroxykaur-16-en-19-oate + reduced [NADPH--hemoprotein reductase] + O2 = gibberellin A12 aldehyde + oxidized [NADPH--hemoprotein reductase] + 2 H2O + H(+). It catalyses the reaction gibberellin A12 aldehyde + reduced [NADPH--hemoprotein reductase] + O2 = gibberellin A12 + oxidized [NADPH--hemoprotein reductase] + H2O + 2 H(+). It functions in the pathway plant hormone biosynthesis; gibberellin biosynthesis. Involved in gibberellin (GA) biosynthesis. Catalyzes three successive oxidations of ent-kaurenoic acid giving gibberellin 12 (GA12), a key step in GAs biosynthesis. GAs, which are involved many processes, including stem elongation, play a central role in plant development. Required for pollen germination and elongation. This is Ent-kaurenoic acid oxidase from Oryza sativa subsp. japonica (Rice).